The following is a 264-amino-acid chain: tRNA (guanine-N(1)-)-methyltransferase (264 aa).

Residues G125 and 145–150 (LGDFVL) contribute to the S-adenosyl-L-methionine site.

Belongs to the RNA methyltransferase TrmD family. In terms of assembly, homodimer.

Its subcellular location is the cytoplasm. It catalyses the reaction guanosine(37) in tRNA + S-adenosyl-L-methionine = N(1)-methylguanosine(37) in tRNA + S-adenosyl-L-homocysteine + H(+). Functionally, specifically methylates guanosine-37 in various tRNAs. This Burkholderia lata (strain ATCC 17760 / DSM 23089 / LMG 22485 / NCIMB 9086 / R18194 / 383) protein is tRNA (guanine-N(1)-)-methyltransferase.